We begin with the raw amino-acid sequence, 1915 residues long: Cysteine repeat modular protein 2 (1915 aa).

An N-terminal signal peptide occupies residues 1–23 (MKFKKELINILALIFVLKKNIFA). FU repeat units follow at residues 53 to 98 (LGLC…QTYV), 104 to 151 (SCIC…GYTQ), 161 to 208 (QLLC…LQYK), 210 to 263 (NGIC…GYVV), and 267 to 315 (TQRC…GNYQ). Asn-138 is a glycosylation site (N-linked (GlcNAc...) asparagine). N-linked (GlcNAc...) asparagine glycosylation is found at Asn-274, Asn-279, and Asn-316. FU repeat units follow at residues 317–362 (SSLC…GFYT), 373–422 (QPIC…QTYY), 427–492 (TRSC…GFYQ), 496–546 (NNSC…SQNN), and 554–602 (TQAC…GTYM). Asn-409 carries an N-linked (GlcNAc...) asparagine glycan. Residues Asn-496, Asn-572, Asn-603, and Asn-621 are each glycosylated (N-linked (GlcNAc...) asparagine). FU repeat units follow at residues 606-639 (TNQCSLCGFGCSSCTNGTFNSCISCLNGYYLQQN), 640-686 (YNVC…GFYV), and 690-739 (QQAC…NECL). Residue Asn-742 is glycosylated (N-linked (GlcNAc...) asparagine). 2 FU repeats span residues 760–814 (DGQC…GFYY) and 818–865 (NKQC…GYYQ). 5 N-linked (GlcNAc...) asparagine glycosylation sites follow: Asn-909, Asn-930, Asn-1051, Asn-1085, and Asn-1193. Residues 1184-1224 (VQIPCDSNINCSGNGKCLWSQDNYNEILCICNINYAGRYCE) form the EGF-like domain. 3 disulfides stabilise this stretch: Cys-1188–Cys-1200, Cys-1194–Cys-1212, and Cys-1214–Cys-1223. Asn-1250, Asn-1297, Asn-1519, Asn-1546, Asn-1554, Asn-1580, and Asn-1596 each carry an N-linked (GlcNAc...) asparagine glycan. 5 helical membrane-spanning segments follow: residues 1599 to 1619 (LLYALLIYIIFITIFIVISII), 1662 to 1682 (YAQLIINLFLYNAIFVLVYSL), 1704 to 1724 (STSVACSIVTYYLTICMVNLF), 1763 to 1783 (GLVFMLQAGMGIPIIILILSF), and 1796 to 1816 (FASFVIDNILDIIILISFCFI). The N-linked (GlcNAc...) asparagine glycan is linked to Asn-1867.

The protein resides in the membrane. Its function is as follows. Required for mucocyst secretion. The polypeptide is Cysteine repeat modular protein 2 (Tetrahymena thermophila (strain SB210)).